We begin with the raw amino-acid sequence, 388 residues long: Chaperone protein DnaJ 1 (388 aa).

In terms of domain architecture, J spans 10-74 (DFYKELGVSS…VKRKEYDETR (65 aa)). The segment at 159 to 237 (GVAMPLRLTS…CKGTGVTTRT (79 aa)) adopts a CR-type zinc-finger fold. 8 residues coordinate Zn(2+): C172, C175, C189, C192, C211, C214, C225, and C228. CXXCXGXG motif repeat units follow at residues 172-179 (CTNCHGSG), 189-196 (CSTCNGSG), 211-218 (CTECRGSG), and 225-232 (CEECKGTG).

This sequence belongs to the DnaJ family. As to quaternary structure, homodimer. The cofactor is Zn(2+).

The protein localises to the cytoplasm. Participates actively in the response to hyperosmotic and heat shock by preventing the aggregation of stress-denatured proteins and by disaggregating proteins, also in an autonomous, DnaK-independent fashion. Unfolded proteins bind initially to DnaJ; upon interaction with the DnaJ-bound protein, DnaK hydrolyzes its bound ATP, resulting in the formation of a stable complex. GrpE releases ADP from DnaK; ATP binding to DnaK triggers the release of the substrate protein, thus completing the reaction cycle. Several rounds of ATP-dependent interactions between DnaJ, DnaK and GrpE are required for fully efficient folding. Also involved, together with DnaK and GrpE, in the DNA replication of plasmids through activation of initiation proteins. The chain is Chaperone protein DnaJ 1 from Mycobacterium leprae (strain TN).